A 104-amino-acid polypeptide reads, in one-letter code: MYAIVEIQGQQFKVEKDQKLYVNHFEAKEGVPIIFNKVLLVDNDGFITIGNPLIKGAKVEVSILRSLVKGDKILVFHKKRRKGYRKLNGHRQQFSQILIRNILI.

This sequence belongs to the bacterial ribosomal protein bL21 family. Part of the 50S ribosomal subunit. Contacts protein L20.

In terms of biological role, this protein binds to 23S rRNA in the presence of protein L20. In Azobacteroides pseudotrichonymphae genomovar. CFP2, this protein is Large ribosomal subunit protein bL21.